Consider the following 377-residue polypeptide: Flagellin C (377 aa).

Coiled-coil stretches lie at residues 103–129 and 301–340; these read SNSKADRVAIQEEITALNDELNRIAET and VDSHRAQLGAFQNRFNHAINNLDNINENVNASKSRIKDTD.

It belongs to the bacterial flagellin family. Heteromer of multiple flagellin subunits including FlaA, FlaB, FlaC, FlaD and possibly FlaE.

The protein resides in the secreted. It localises to the bacterial flagellum. Its function is as follows. Flagellin is the subunit protein which polymerizes to form the filaments of bacterial flagella. FlaC is not essential for flagellar synthesis and motility. This is Flagellin C (flaC) from Vibrio anguillarum (Listonella anguillarum).